The sequence spans 415 residues: Serine--tRNA ligase (415 aa).

231–233 (TAE) is an L-serine binding site. ATP is bound at residue 262–264 (RSE). Glu-285 is a binding site for L-serine. Position 349–352 (349–352 (EISS)) interacts with ATP. Ser-383 contacts L-serine.

Belongs to the class-II aminoacyl-tRNA synthetase family. Type-1 seryl-tRNA synthetase subfamily. As to quaternary structure, homodimer. The tRNA molecule binds across the dimer.

The protein resides in the cytoplasm. The enzyme catalyses tRNA(Ser) + L-serine + ATP = L-seryl-tRNA(Ser) + AMP + diphosphate + H(+). It carries out the reaction tRNA(Sec) + L-serine + ATP = L-seryl-tRNA(Sec) + AMP + diphosphate + H(+). Its pathway is aminoacyl-tRNA biosynthesis; selenocysteinyl-tRNA(Sec) biosynthesis; L-seryl-tRNA(Sec) from L-serine and tRNA(Sec): step 1/1. Functionally, catalyzes the attachment of serine to tRNA(Ser). Is also able to aminoacylate tRNA(Sec) with serine, to form the misacylated tRNA L-seryl-tRNA(Sec), which will be further converted into selenocysteinyl-tRNA(Sec). This is Serine--tRNA ligase from Helicobacter pylori (strain HPAG1).